Consider the following 168-residue polypeptide: ATP synthase F(1) complex subunit delta, mitochondrial (168 aa).

A mitochondrion-targeting transit peptide spans 1–22 (MLPASLLRHPGLRRLMLQARTY). 2 positions are modified to N6-acetyllysine; alternate: Lys-136 and Lys-165. Lys-136 and Lys-165 each carry N6-succinyllysine; alternate.

Belongs to the ATPase epsilon chain family. In terms of assembly, component of the ATP synthase complex composed at least of ATP5F1A/subunit alpha, ATP5F1B/subunit beta, ATP5MC1/subunit c (homooctomer), MT-ATP6/subunit a, MT-ATP8/subunit 8, ATP5ME/subunit e, ATP5MF/subunit f, ATP5MG/subunit g, ATP5MK/subunit k, ATP5MJ/subunit j, ATP5F1C/subunit gamma, ATP5F1D/subunit delta, ATP5F1E/subunit epsilon, ATP5PF/subunit F6, ATP5PB/subunit b, ATP5PD/subunit d, ATP5PO/subunit OSCP. ATP synthase complex consists of a soluble F(1) head domain (subunits alpha(3) and beta(3)) - the catalytic core - and a membrane F(0) domain - the membrane proton channel (subunits c, a, 8, e, f, g, k and j). These two domains are linked by a central stalk (subunits gamma, delta, and epsilon) rotating inside the F1 region and a stationary peripheral stalk (subunits F6, b, d, and OSCP). Component of a complex composed at least by ATPIF1, ATP5F1A, ATP5F1B, ATP5F1C AND ATP5F1E.

The protein resides in the mitochondrion. It localises to the mitochondrion inner membrane. Its function is as follows. Subunit delta, of the mitochondrial membrane ATP synthase complex (F(1)F(0) ATP synthase or Complex V) that produces ATP from ADP in the presence of a proton gradient across the membrane which is generated by electron transport complexes of the respiratory chain. ATP synthase complex consist of a soluble F(1) head domain - the catalytic core - and a membrane F(1) domain - the membrane proton channel. These two domains are linked by a central stalk rotating inside the F(1) region and a stationary peripheral stalk. During catalysis, ATP synthesis in the catalytic domain of F(1) is coupled via a rotary mechanism of the central stalk subunits to proton translocation. In vivo, can only synthesize ATP although its ATP hydrolase activity can be activated artificially in vitro. With the central stalk subunit gamma, is essential for the biogenesis of F(1) catalytic part of the ATP synthase complex namely in the formation of F1 assembly intermediate. This Mus musculus (Mouse) protein is ATP synthase F(1) complex subunit delta, mitochondrial.